The primary structure comprises 119 residues: Large ribosomal subunit protein bL20 (119 aa).

It belongs to the bacterial ribosomal protein bL20 family.

Binds directly to 23S ribosomal RNA and is necessary for the in vitro assembly process of the 50S ribosomal subunit. It is not involved in the protein synthesizing functions of that subunit. The protein is Large ribosomal subunit protein bL20 of Dehalococcoides mccartyi (strain ATCC BAA-2100 / JCM 16839 / KCTC 5957 / BAV1).